The primary structure comprises 255 residues: Pimeloyl-[acyl-carrier protein] methyl ester esterase (255 aa).

Residues Trp18, 78 to 79, and 139 to 143 each bind substrate; these read SL and FLALD. Residue Ser78 is the Nucleophile of the active site. Catalysis depends on residues Asp203 and His233. His233 lines the substrate pocket.

It belongs to the AB hydrolase superfamily. Carboxylesterase BioH family. As to quaternary structure, monomer.

Its subcellular location is the cytoplasm. It carries out the reaction 6-carboxyhexanoyl-[ACP] methyl ester + H2O = 6-carboxyhexanoyl-[ACP] + methanol + H(+). Its pathway is cofactor biosynthesis; biotin biosynthesis. Its function is as follows. The physiological role of BioH is to remove the methyl group introduced by BioC when the pimeloyl moiety is complete. It allows to synthesize pimeloyl-ACP via the fatty acid synthetic pathway through the hydrolysis of the ester bonds of pimeloyl-ACP esters. This chain is Pimeloyl-[acyl-carrier protein] methyl ester esterase, found in Xylella fastidiosa (strain M23).